A 442-amino-acid polypeptide reads, in one-letter code: 3-phosphoshikimate 1-carboxyvinyltransferase (442 aa).

Polar residues predominate over residues 1 to 11; it reads MQVSRPLTVSA. Residues 1–25 are disordered; sequence MQVSRPLTVSASPKGLSGRTRVPGD. 3-phosphoshikimate contacts are provided by Lys26, Ser27, and Arg31. Lys26 lines the phosphoenolpyruvate pocket. Gly98 and Arg126 together coordinate phosphoenolpyruvate. Positions 171, 173, 324, and 351 each coordinate 3-phosphoshikimate. Gln173 provides a ligand contact to phosphoenolpyruvate. The active-site Proton acceptor is the Asp324. Phosphoenolpyruvate is bound by residues Arg355 and Arg398.

This sequence belongs to the EPSP synthase family. As to quaternary structure, monomer.

It is found in the cytoplasm. The catalysed reaction is 3-phosphoshikimate + phosphoenolpyruvate = 5-O-(1-carboxyvinyl)-3-phosphoshikimate + phosphate. Its pathway is metabolic intermediate biosynthesis; chorismate biosynthesis; chorismate from D-erythrose 4-phosphate and phosphoenolpyruvate: step 6/7. In terms of biological role, catalyzes the transfer of the enolpyruvyl moiety of phosphoenolpyruvate (PEP) to the 5-hydroxyl of shikimate-3-phosphate (S3P) to produce enolpyruvyl shikimate-3-phosphate and inorganic phosphate. This is 3-phosphoshikimate 1-carboxyvinyltransferase from Gluconobacter oxydans (strain 621H) (Gluconobacter suboxydans).